The primary structure comprises 409 residues: MKKELLASLVLCLSLSPLVSTNEVFAATTNKETKENVSITNEIGYEKVKDMLEQQKYDFEHNTPLAHPKESKLTDSDEGVLLYSALSKVDKQKFHEFTYDIDDVKTSEKNNKLIVEAYITRNFVFGVEKVTTSLGDNIKLEIPKTTSNKQSSQSTNTSNLSFSQVKNSSNQLNVIPLSNSSKQLNVTQLNNSSSTLQYENDEEYSSDVKLDEFLKKYKQEVKNDDKEEVKSEDKPVSMNFNAANSNQLTVTATSVKGYSGYAAMKYAEKYALKPNKNYKYYKDKDCTNFVSQALRAGRMPYFKEWKPYTDAWVNAGAFRSYILKAGGIKMKTVSDTYSNVKLGDVYHYDYHNKIGLRYADGWMDHTAIVTSRANMKLYVSYHSTNRLNVPREYVTSKEGGKRYVSSIRN.

A signal peptide spans 1–26 (MKKELLASLVLCLSLSPLVSTNEVFA).

This is an uncharacterized protein from Bacillus subtilis (strain 168).